The chain runs to 282 residues: NADPH-dependent 7-cyano-7-deazaguanine reductase (282 aa).

I88–S90 is a substrate binding site. S90–K91 contributes to the NADPH binding site. C190 serves as the catalytic Thioimide intermediate. D197 functions as the Proton donor in the catalytic mechanism. Residue H229–E230 coordinates substrate. R258–G259 serves as a coordination point for NADPH.

This sequence belongs to the GTP cyclohydrolase I family. QueF type 2 subfamily. In terms of assembly, homodimer.

The protein resides in the cytoplasm. It catalyses the reaction 7-aminomethyl-7-carbaguanine + 2 NADP(+) = 7-cyano-7-deazaguanine + 2 NADPH + 3 H(+). The protein operates within tRNA modification; tRNA-queuosine biosynthesis. Functionally, catalyzes the NADPH-dependent reduction of 7-cyano-7-deazaguanine (preQ0) to 7-aminomethyl-7-deazaguanine (preQ1). The protein is NADPH-dependent 7-cyano-7-deazaguanine reductase of Salmonella paratyphi B (strain ATCC BAA-1250 / SPB7).